The chain runs to 437 residues: Chloride intracellular channel protein 5 (437 aa).

The segment covering 1 to 14 (MNDENYSTTIYNRV) has biased composition (polar residues). Positions 1 to 197 (MNDENYSTTI…VSEGNESASA (197 aa)) are disordered. Residues 34-45 (DEVHEDVRREDN) are compositionally biased toward basic and acidic residues. Tandem repeats lie at residues 118–125 (QSDSEEPQ), 126–133 (ASDPEEPQ), 134–141 (ASDPEEPQ), and 142–149 (GPDPEEPQ). The 4 X 8 AA tandem repeats of [AGQ]-[SP]-D-[PS]-E-E-P-Q stretch occupies residues 118–149 (QSDSEEPQASDPEEPQASDPEEPQGPDPEEPQ). Acidic residues predominate over residues 121 to 157 (SEEPQASDPEEPQASDPEEPQGPDPEEPQENGNEMEA). Positions 161–184 (SPSSFTIQNSRAFSTREISPTSYS) are enriched in polar residues. Positions 217–220 (CPFS) match the G-site motif. Residues 219–239 (FSQRLFMILWLKGVVFNVTTV) traverse the membrane as a helical segment. Residues 263 to 427 (NGDVKTDVNK…AADSEIELAY (165 aa)) enclose the GST C-terminal domain.

Belongs to the chloride channel CLIC family. In terms of assembly, component of a multimeric complex consisting of several cytoskeletal proteins, including actin, ezrin, alpha-actinin, gelsolin, and IQGAP1. Interacts with AKAP9. Interacts with TPRN. TPRN, CLIC5 and PTPQR form concentric rings at the base of stereocilia and may form a complex. Interacts with EZR, MYO6 and RDX; the proteins may work together as a complex to stabilize linkages between the plasma membrane and subjacent actin cytoskeleton at the stereocilium base. In terms of processing, phosphorylated. Expressed in most tissues. Higher levels found in kidney, heart, skeletal muscle, T84 and PANC-1 cells.

Its subcellular location is the golgi apparatus. It localises to the cytoplasm. The protein localises to the cytoskeleton. The protein resides in the microtubule organizing center. It is found in the centrosome. Its subcellular location is the cell cortex. It localises to the membrane. The protein localises to the apical cell membrane. The protein resides in the mitochondrion. It is found in the cell projection. Its subcellular location is the stereocilium. It carries out the reaction Na(+)(in) = Na(+)(out). The enzyme catalyses K(+)(in) = K(+)(out). It catalyses the reaction chloride(in) = chloride(out). Its activity is regulated as follows. Inhibited by F-actin. In the soluble state, catalyzes glutaredoxin-like thiol disulfide exchange reactions with reduced glutathione as electron donor. Can insert into membranes and form non-selective ion channels almost equally permeable to Na(+), K(+) and Cl(-). Required for normal hearing. It is necessary for the formation of stereocilia in the inner ear and normal development of the organ of Corti. May play a role in the regulation of transepithelial ion absorption and secretion. Is required for the development and/or maintenance of the proper glomerular endothelial cell and podocyte architecture. Plays a role in formation of the lens suture in the eye, which is important for normal optical properties of the lens. This is Chloride intracellular channel protein 5 (CLIC5) from Bos taurus (Bovine).